The following is a 364-amino-acid chain: Probable secreted lipase phiG (364 aa).

An N-terminal signal peptide occupies residues 1 to 18; that stretch reads MMPFMDLILSILVSSVLL. Asparagine 49 is a glycosylation site (N-linked (GlcNAc...) asparagine). Catalysis depends on serine 203, which acts as the Nucleophile. Asparagine 262 carries N-linked (GlcNAc...) asparagine glycosylation.

It belongs to the AB hydrolase superfamily.

Its subcellular location is the secreted. The catalysed reaction is a carboxylic ester + H2O = an alcohol + a carboxylate + H(+). Functionally, part of the gene cluster that mediates the biosynthesis of the antihypercholesterolemic agents phomoidrides which are dimeric anhydrides. The function of phiG within the pathway has still to be determined. The pathway begins with the highly reducing polyketide synthase phiA that catalyzes the formation of a C12-fatty acyl-ACP, starting from one acetate and 5 malonate units. The hydrolase phiM is involved in the release of the C12-fatty acyl chain from phiA. The alkylcitrate synthase (ACS) phiJ and the alkylcitrate dehydratase (ACDH) phiI then give rise to decarboxylated monomeric anhydrides by coupling the C12-fatty acyl chain with oxalacetic acid. The cyclase phiC is responsible for the dimerization of the monomeric anhydrides which leads to the production of prephomoidride that contains the characteristic bicyclo[4.3.1]deca-1,6-diene system of phomoidrides. Iterative oxidation catalyzed by the alpha-ketoglutarate-dependent dioxygenase phiK produced then phomoidride A. Finally, the methyltransferase phiE converts phomoidride A to phomoidride B via an acetalization reaction. The phosphatidylethanolamine-binding protein phiB and phiN are not essential for dimerization and their functions have still to be determined. This Fungal sp. (strain ATCC 74256) protein is Probable secreted lipase phiG.